A 181-amino-acid polypeptide reads, in one-letter code: Probable calcium-binding protein CML16 (181 aa).

Residues 1-24 are disordered; the sequence is MSNTTEKKMPQQQQVERPTALAPA. EF-hand domains lie at 23–58, 63–98, 100–135, and 136–171; these read PADA…IAPP, AGGR…GRGD, EHEA…IGEG, and CSAE…DAAA. Positions 36, 38, 40, 42, 47, 76, 78, 80, 87, 113, 115, 117, 119, 124, 149, 151, 153, 155, and 160 each coordinate Ca(2+).

Its function is as follows. Potential calcium sensor. In Oryza sativa subsp. japonica (Rice), this protein is Probable calcium-binding protein CML16 (CML16).